Here is a 122-residue protein sequence, read N- to C-terminus: Large ribosomal subunit protein uL18 (122 aa).

This sequence belongs to the universal ribosomal protein uL18 family. In terms of assembly, part of the 50S ribosomal subunit; part of the 5S rRNA/L5/L18/L25 subcomplex. Contacts the 5S and 23S rRNAs.

Its function is as follows. This is one of the proteins that bind and probably mediate the attachment of the 5S RNA into the large ribosomal subunit, where it forms part of the central protuberance. This is Large ribosomal subunit protein uL18 from Synechococcus sp. (strain JA-2-3B'a(2-13)) (Cyanobacteria bacterium Yellowstone B-Prime).